A 328-amino-acid chain; its full sequence is Putative thiosulfate sulfurtransferase mpst-1 (328 aa).

Rhodanese domains follow at residues Asn22–Thr162 and Lys202–Ser320. The Cysteine persulfide intermediate role is filled by Cys278.

The catalysed reaction is thiosulfate + hydrogen cyanide = thiocyanate + sulfite + 2 H(+). This Caenorhabditis elegans protein is Putative thiosulfate sulfurtransferase mpst-1 (mpst-1).